The following is a 429-amino-acid chain: Glutamate-1-semialdehyde 2,1-aminomutase (429 aa).

An N6-(pyridoxal phosphate)lysine modification is found at lysine 265.

The protein belongs to the class-III pyridoxal-phosphate-dependent aminotransferase family. HemL subfamily. Homodimer. Pyridoxal 5'-phosphate serves as cofactor.

It localises to the cytoplasm. It carries out the reaction (S)-4-amino-5-oxopentanoate = 5-aminolevulinate. It participates in porphyrin-containing compound metabolism; protoporphyrin-IX biosynthesis; 5-aminolevulinate from L-glutamyl-tRNA(Glu): step 2/2. This chain is Glutamate-1-semialdehyde 2,1-aminomutase, found in Legionella pneumophila subsp. pneumophila (strain Philadelphia 1 / ATCC 33152 / DSM 7513).